The following is a 413-amino-acid chain: Snake venom metalloproteinase AaPA (413 aa).

The first 20 residues, 1-20 (MIQVLLVTICLAAFPYQGSS), serve as a signal peptide directing secretion. Residues 21-189 (IILESGKVND…KKASQLIVST (169 aa)) constitute a propeptide that is removed on maturation. Residues 193-390 (RYMEIVIVVD…ENPPCILNKP (198 aa)) form the Peptidase M12B domain. Residues E196 and D280 each contribute to the Ca(2+) site. Cystine bridges form between C304/C385, C344/C369, and C346/C352. H329 provides a ligand contact to Zn(2+). Residue E330 is part of the active site. Positions 333 and 339 each coordinate Zn(2+). C385, N388, V400, N403, L405, E407, and D413 together coordinate Ca(2+). A propeptide spanning residues 391-413 (LRTDTVSTPVSGNELLEAEKDYD) is cleaved from the precursor.

Belongs to the venom metalloproteinase (M12B) family. P-I subfamily. In terms of assembly, monomer. The cofactor is Zn(2+). As to expression, expressed by the venom gland.

It is found in the secreted. Its function is as follows. Snake venom zinc metalloprotease that may activate prothrombin. The protein is Snake venom metalloproteinase AaPA of Deinagkistrodon acutus (Hundred-pace snake).